A 458-amino-acid chain; its full sequence is Zinc finger protein 19 (458 aa).

The region spanning 14-85 (VTFEDVAVHF…EAQDDPPAER (72 aa)) is the KRAB domain. 9 consecutive C2H2-type zinc fingers follow at residues 161–183 (FICE…QRIH), 189–211 (FECS…QRIH), 217–239 (YQCE…QRIH), 245–267 (YYCT…QRIH), 273–295 (YECN…QKIH), 301–323 (YECN…QRIH), 329–351 (YSCK…QRIH), 357–379 (FDCV…LRIH), and 385–407 (YVCD…QRIH). The C2H2-type 10; atypical zinc finger occupies 413 to 433 (YECSKYEKAFGTSSQLGHLEH).

Belongs to the krueppel C2H2-type zinc-finger protein family.

The protein resides in the nucleus. Its function is as follows. May be involved in transcriptional regulation. The protein is Zinc finger protein 19 (ZNF19) of Homo sapiens (Human).